The chain runs to 201 residues: Large ribosomal subunit protein bL9 (201 aa).

A compositionally biased stretch (basic and acidic residues) spans 150–165 (EAERQAAGEDLTQRRD). The tract at residues 150 to 201 (EAERQAAGEDLTQRRDDEEEEAVEAAEFFESEELAPGDEEEEAAGEEEDAKE) is disordered. The span at 166-201 (DEEEEAVEAAEFFESEELAPGDEEEEAAGEEEDAKE) shows a compositional bias: acidic residues.

It belongs to the bacterial ribosomal protein bL9 family.

Its function is as follows. Binds to the 23S rRNA. In Parvibaculum lavamentivorans (strain DS-1 / DSM 13023 / NCIMB 13966), this protein is Large ribosomal subunit protein bL9.